The sequence spans 83 residues: Mitochondrial import inner membrane translocase subunit Tim8 (83 aa).

Positions 35–60 (CWDVCFADYRPPSKMDGKTQTCIQNC) match the Twin CX3C motif motif. 2 cysteine pairs are disulfide-bonded: C35-C60 and C39-C56.

The protein belongs to the small Tim family. In terms of assembly, heterohexamer; composed of 3 copies of ddp-1/tim-8 and 3 copies of tin-13/tim-13, named soluble 70 kDa complex. Associates with the TIM22 complex, whose core is composed of tim-22.

Its subcellular location is the mitochondrion inner membrane. Functionally, mitochondrial intermembrane chaperone that participates in the import and insertion of some multi-pass transmembrane proteins into the mitochondrial inner membrane. Also required for the transfer of beta-barrel precursors from the TOM complex to the sorting and assembly machinery (SAM complex) of the outer membrane. Acts as a chaperone-like protein that protects the hydrophobic precursors from aggregation and guide them through the mitochondrial intermembrane space. The ddp-1/tim-8-tim-13 complex mediates the import of some proteins while the predominant tim-9/tin-9.1-tim-10/tin-10 70 kDa complex mediates the import of much more proteins. The chain is Mitochondrial import inner membrane translocase subunit Tim8 from Caenorhabditis elegans.